We begin with the raw amino-acid sequence, 167 residues long: Probable D-lyxose ketol-isomerase (167 aa).

4 residues coordinate Mn(2+): His-69, His-71, Glu-82, and His-137.

The protein belongs to the D-lyxose ketol-isomerase family. In terms of assembly, homodimer. The cofactor is Mn(2+).

It carries out the reaction D-lyxose = D-xylulose. In terms of biological role, sugar isomerase that catalyzes the reversible isomerization of D-lyxose to D-xylulose. The chain is Probable D-lyxose ketol-isomerase (ydaE) from Bacillus subtilis (strain 168).